Reading from the N-terminus, the 279-residue chain is S-formylglutathione hydrolase (279 aa).

Active-site charge relay system residues include Ser-150, Asp-226, and His-258.

This sequence belongs to the esterase D family.

The enzyme catalyses S-formylglutathione + H2O = formate + glutathione + H(+). Its function is as follows. Serine hydrolase involved in the detoxification of formaldehyde. Hydrolyzes S-formylglutathione to glutathione and formate. The sequence is that of S-formylglutathione hydrolase (fghA) from Paracoccus denitrificans (strain Pd 1222).